A 785-amino-acid chain; its full sequence is Putative endonuclease MutS2 (785 aa).

Residue 335 to 342 participates in ATP binding; that stretch reads GPNTGGKT. Residues 513 to 586 adopt a coiled-coil conformation; sequence TAEHNEVDTM…AEKVKAAMKE (74 aa). Positions 636 to 785 are partially complements a deletion for mitomycin C (MMC) resistance and for chromosomal DNA transformation; sequence KRDFKPGDEV…GSGVTVVELK (150 aa). The interval 641–681 is KOW region; sequence PGDEVKVLTFGQKGTLLEKTGGNEWNVQIGILKMKVKEKDL. Residues 710 to 785 form the Smr domain; that stretch reads LDLRGERYEN…GSGVTVVELK (76 aa).

Belongs to the DNA mismatch repair MutS family. MutS2 subfamily. In terms of assembly, binds to ribosomes as a homodimer. Binds to stalled/collided disomes, association is greater in (ribosome-targeted) antibiotic-treated cells (with increased stalling at specific mRNA sites). The clamp domain of one monomer binds the A-site finger, the 23S rRNA of the central protuberance and ribosomal protein uL5 of the leading (stalled) ribosome, while the other monomer binds in a gap between the ribosomal central protuberance and the L1 stalk of the leading ribosome.

The protein localises to the cytoplasm. Functionally, acts as a ribosome collision sensor splitting the ribosome into its 2 subunits. Detects stalled/collided disomes (pairs of ribosomes where the leading ribosome is stalled and a second ribosome has collided with it) which it binds and splits, by an ATP-hydrolysis driven conformational change. Does not seem to have endoribonuclease activity (in the context of ribosome stalling). Acts upstream of the ribosome quality control system (RQC), a ribosome-associated complex that mediates the extraction of incompletely synthesized nascent chains from stalled ribosomes and their subsequent degradation, probably generates substrates for RQC. Its function is as follows. Does not seem to be involved in mismatch repair or in the prevention of interspecific recombination during DNA transformation. Might be involved in homologous recombination. Putative endonuclease that may be involved in the suppression of homologous recombination and may therefore have a key role in the control of bacterial genetic diversity. The sequence is that of Putative endonuclease MutS2 from Bacillus subtilis (strain 168).